The sequence spans 52 residues: Alpha-1-antiproteinase 3 (52 aa).

A disordered region spans residues 1–20 (EDLQGDAVPEEXATKDDNEH).

Belongs to the serpin family. N-glycosylated; contains glycans with bi- and triantennary side chains. Plasma.

Its subcellular location is the secreted. This is Alpha-1-antiproteinase 3 from Equus caballus (Horse).